The primary structure comprises 430 residues: Adenylosuccinate synthetase (430 aa).

Residues 13 to 19 and 41 to 43 each bind GTP; these read GDEGKGK and GHT. Asp14 acts as the Proton acceptor in catalysis. Residues Asp14 and Gly41 each contribute to the Mg(2+) site. Residues 14–17, 39–42, Thr130, Arg144, Gln225, Thr240, and Arg304 each bind IMP; these read DEGK and NAGH. His42 serves as the catalytic Proton donor. Residue 300-306 coordinates substrate; sequence ASTGRPR. GTP contacts are provided by residues Arg306, 332–334, and 414–416; these read KLD and STG.

This sequence belongs to the adenylosuccinate synthetase family. As to quaternary structure, homodimer. It depends on Mg(2+) as a cofactor.

Its subcellular location is the cytoplasm. It catalyses the reaction IMP + L-aspartate + GTP = N(6)-(1,2-dicarboxyethyl)-AMP + GDP + phosphate + 2 H(+). It functions in the pathway purine metabolism; AMP biosynthesis via de novo pathway; AMP from IMP: step 1/2. Its function is as follows. Plays an important role in the de novo pathway of purine nucleotide biosynthesis. Catalyzes the first committed step in the biosynthesis of AMP from IMP. In Xanthomonas oryzae pv. oryzae (strain PXO99A), this protein is Adenylosuccinate synthetase.